Here is a 207-residue protein sequence, read N- to C-terminus: MDTLLFATNNKNKAREVEEALKKINFPIHVITNQDLTDPPHVLETGTTFLANAKLKAHKMAEFSNLPTLADDSGLSVDKLNGAPGVHSARYGGEAHNDALNNAKLLAELGGVPREKRQATFHTTMVVSWPGRFDDDLVTQGEIRGEILTYPRGDGDFGYDPLFFVPDKGKTFAEMTVDEKNAISHRGQALRKLLAELPTWWKKMENE.

8–13 provides a ligand contact to substrate; it reads TNNKNK. Residue Asp-72 is the Proton acceptor of the active site. Asp-72 lines the Mg(2+) pocket. Substrate is bound by residues Ser-73, 157 to 160, Lys-180, and 185 to 186; these read FGYD and HR.

The protein belongs to the HAM1 NTPase family. As to quaternary structure, homodimer. The cofactor is Mg(2+).

The enzyme catalyses XTP + H2O = XMP + diphosphate + H(+). It carries out the reaction dITP + H2O = dIMP + diphosphate + H(+). It catalyses the reaction ITP + H2O = IMP + diphosphate + H(+). In terms of biological role, pyrophosphatase that catalyzes the hydrolysis of nucleoside triphosphates to their monophosphate derivatives, with a high preference for the non-canonical purine nucleotides XTP (xanthosine triphosphate), dITP (deoxyinosine triphosphate) and ITP. Seems to function as a house-cleaning enzyme that removes non-canonical purine nucleotides from the nucleotide pool, thus preventing their incorporation into DNA/RNA and avoiding chromosomal lesions. The chain is dITP/XTP pyrophosphatase from Lactobacillus johnsonii (strain CNCM I-12250 / La1 / NCC 533).